The primary structure comprises 183 residues: Ribose 1,5-bisphosphate phosphokinase PhnN (183 aa).

6–13 provides a ligand contact to ATP; it reads GPSGAGKD.

Belongs to the ribose 1,5-bisphosphokinase family.

The enzyme catalyses alpha-D-ribose 1,5-bisphosphate + ATP = 5-phospho-alpha-D-ribose 1-diphosphate + ADP. Its pathway is metabolic intermediate biosynthesis; 5-phospho-alpha-D-ribose 1-diphosphate biosynthesis; 5-phospho-alpha-D-ribose 1-diphosphate from D-ribose 5-phosphate (route II): step 3/3. Catalyzes the phosphorylation of ribose 1,5-bisphosphate to 5-phospho-D-ribosyl alpha-1-diphosphate (PRPP). This Agrobacterium fabrum (strain C58 / ATCC 33970) (Agrobacterium tumefaciens (strain C58)) protein is Ribose 1,5-bisphosphate phosphokinase PhnN.